Consider the following 53-residue polypeptide: UPF0391 membrane protein ESA_03375 (53 aa).

The next 2 helical transmembrane spans lie at 4–24 (WGII…GGLA) and 28–48 (AGAA…SLFM).

This sequence belongs to the UPF0391 family.

The protein localises to the cell membrane. This is UPF0391 membrane protein ESA_03375 from Cronobacter sakazakii (strain ATCC BAA-894) (Enterobacter sakazakii).